Consider the following 312-residue polypeptide: uncharacterized protein (312 aa).

Catalysis depends on charge relay system residues serine 200, aspartate 261, and histidine 292.

It belongs to the AB hydrolase superfamily. AB hydrolase 2 family.

This is an uncharacterized protein from Acanthamoeba polyphaga mimivirus (APMV).